Consider the following 133-residue polypeptide: MNYDNYWDEDKPELNITPLVDVMLVLLAILMVTTPTLTYKEEIALPSGSKTARATQDKVIEIRMDKDAKIYIDSQTYEYNSFPDTFNLLSKKYDKDTRVSIRADKRLTYDKVIYLLKTIKEAGFLKVSLITSP.

Over 1–15 (MNYDNYWDEDKPELN) the chain is Cytoplasmic. Residues 16 to 32 (ITPLVDVMLVLLAILMV) form a helical membrane-spanning segment. The Periplasmic segment spans residues 33-133 (TTPTLTYKEE…FLKVSLITSP (101 aa)).

It belongs to the ExbD/TolR family.

Its subcellular location is the cell inner membrane. This Helicobacter pylori (strain J99 / ATCC 700824) (Campylobacter pylori J99) protein is Putative biopolymer transport protein ExbD-like 1.